Reading from the N-terminus, the 648-residue chain is Probable ATP-dependent RNA helicase DDX43 (648 aa).

Positions 1 to 60 (MSHHGGAPKASTWVVASRRSSTVSRAPERRPAEELNRTGPEGYSVGRGGRWRGTSRPPEA) are disordered. A compositionally biased stretch (low complexity) spans 10–25 (ASTWVVASRRSSTVSR). A compositionally biased stretch (basic and acidic residues) spans 26–36 (APERRPAEELN). The KH domain maps to 67–128 (ELPLCFALKS…AMQTKAKAVI (62 aa)). Residues 242 to 270 (TFDDAFQCYPEVMENIKKAGFQKPTPIQS) carry the Q motif motif. In terms of domain architecture, Helicase ATP-binding spans 273–448 (WPIVLQGIDL…QSYLKEPMIV (176 aa)). 286–293 (AQTGTGKT) provides a ligand contact to ATP. The DEAD box motif lies at 396–399 (DEAD). Residues 460–621 (SVKQNIIVTT…SIPEELVSMA (162 aa)) enclose the Helicase C-terminal domain. The segment covering 628–641 (QQKREMERKMERPQ) has biased composition (basic and acidic residues). The tract at residues 628 to 648 (QQKREMERKMERPQGRPKKFH) is disordered.

The protein belongs to the DEAD box helicase family. Expressed in testis. Expressed in many tumors of various histological types at a level that is 100-fold higher than the level observed in normal tissues except testis.

It carries out the reaction ATP + H2O = ADP + phosphate + H(+). In Homo sapiens (Human), this protein is Probable ATP-dependent RNA helicase DDX43 (DDX43).